Here is a 305-residue protein sequence, read N- to C-terminus: UDP-3-O-acyl-N-acetylglucosamine deacetylase (305 aa).

Zn(2+) is bound by residues His-79, His-238, and Asp-242. The Proton donor role is filled by His-265.

This sequence belongs to the LpxC family. Requires Zn(2+) as cofactor.

The catalysed reaction is a UDP-3-O-[(3R)-3-hydroxyacyl]-N-acetyl-alpha-D-glucosamine + H2O = a UDP-3-O-[(3R)-3-hydroxyacyl]-alpha-D-glucosamine + acetate. It participates in glycolipid biosynthesis; lipid IV(A) biosynthesis; lipid IV(A) from (3R)-3-hydroxytetradecanoyl-[acyl-carrier-protein] and UDP-N-acetyl-alpha-D-glucosamine: step 2/6. Its function is as follows. Catalyzes the hydrolysis of UDP-3-O-myristoyl-N-acetylglucosamine to form UDP-3-O-myristoylglucosamine and acetate, the committed step in lipid A biosynthesis. The sequence is that of UDP-3-O-acyl-N-acetylglucosamine deacetylase from Vibrio vulnificus (strain CMCP6).